A 116-amino-acid polypeptide reads, in one-letter code: Cuticle protein AM1274 (116 aa).

A Pyrrolidone carboxylic acid modification is found at Gln1. The interval 1–22 (QLANEPPIEIIRQESTDNGDGN) is disordered. The region spanning 20–85 (DGNFNFLFET…PVSDFIPTPH (66 aa)) is the Chitin-binding type R&amp;R domain. Thr83 carries O-linked (HexNAc) threonine glycosylation.

In terms of tissue distribution, arthrodial membrane.

The sequence is that of Cuticle protein AM1274 from Cancer pagurus (Rock crab).